A 303-amino-acid polypeptide reads, in one-letter code: UDP-3-O-acyl-N-acetylglucosamine deacetylase (303 aa).

Zn(2+) contacts are provided by His-78, His-237, and Asp-241. His-264 (proton donor) is an active-site residue.

This sequence belongs to the LpxC family. It depends on Zn(2+) as a cofactor.

The enzyme catalyses a UDP-3-O-[(3R)-3-hydroxyacyl]-N-acetyl-alpha-D-glucosamine + H2O = a UDP-3-O-[(3R)-3-hydroxyacyl]-alpha-D-glucosamine + acetate. Its pathway is glycolipid biosynthesis; lipid IV(A) biosynthesis; lipid IV(A) from (3R)-3-hydroxytetradecanoyl-[acyl-carrier-protein] and UDP-N-acetyl-alpha-D-glucosamine: step 2/6. Its function is as follows. Catalyzes the hydrolysis of UDP-3-O-myristoyl-N-acetylglucosamine to form UDP-3-O-myristoylglucosamine and acetate, the committed step in lipid A biosynthesis. This Pseudomonas savastanoi pv. phaseolicola (strain 1448A / Race 6) (Pseudomonas syringae pv. phaseolicola (strain 1448A / Race 6)) protein is UDP-3-O-acyl-N-acetylglucosamine deacetylase.